A 209-amino-acid chain; its full sequence is GTP-binding protein RHO1 (209 aa).

Position 2 is an N-acetylserine (serine 2). Glycine 17–threonine 24 is a GTP binding site. The Effector region signature appears at tyrosine 39 to tyrosine 47. GTP contacts are provided by residues aspartate 64 to glutamine 68 and cysteine 122 to aspartate 125. Residues lysine 187 to leucine 209 are disordered. Over residues threonine 190–leucine 209 the composition is skewed to basic residues. At cysteine 206 the chain carries Cysteine methyl ester. The S-geranylgeranyl cysteine moiety is linked to residue cysteine 206. A propeptide spans valine 207–leucine 209 (removed in mature form).

It belongs to the small GTPase superfamily. Rho family. Interacts with BEM4; the interaction is direct. Interacts with SEC3; the interaction is direct. Interacts with the GAP BAG7. Interacts with the GAP LRG1. Interacts with the GAP SAC7. Interacts with the GAP RDI1. Interacts with the 1,3-beta-glucan synthase component FKS1. Interacts with the protein kinase PKC1. Interacts with the G protein beta subunit STE4. Interacts with SKN7. Interacts with TUS1. Interacts with BNI1.

It localises to the cell membrane. The protein resides in the endosome membrane. Its subcellular location is the peroxisome membrane. The catalysed reaction is GTP + H2O = GDP + phosphate + H(+). Its activity is regulated as follows. Alternates between an inactive form bound to GDP and an active form bound to GTP. Activated by the guanine nucleotide-exchange factors (GEFs) ROM1, ROM2 and TUS1, and inactivated by GTPase-activating proteins (GAPs) BAG7, BEM2, LRG1, and SAC7, and the Rho GDP-dissociation inhibitor RDI1. The different GAPs regulate RHO1 in a target-specific manner. Acts as a central regulator in the cell wall integrity signaling pathway, which is regulated by the cell cycle and in response to various types of cell wall stress. Integrates signals from different cell surface sensors, and activates a set of effectors, regulating processes including beta-glucan synthesis at the site of wall remodeling, gene expression related to cell wall biogenesis, organization of the actin cytoskeleton, and protein- and secretory vesicle-targeting to the growth site. Activates the protein kinase C (PKC1) MAP kinase cascade, the beta-1,3-glucan synthase (FKS1), the formin BNI1, the exocyst component SEC3 and the transcription factor SKN7. In Saccharomyces cerevisiae (strain ATCC 204508 / S288c) (Baker's yeast), this protein is GTP-binding protein RHO1 (RHO1).